The primary structure comprises 122 residues: Small ribosomal subunit protein uS13 (122 aa).

Positions 99 to 122 (RGQRTHTNARTRKGPAKAIAGKKK) are disordered.

This sequence belongs to the universal ribosomal protein uS13 family. As to quaternary structure, part of the 30S ribosomal subunit. Forms a loose heterodimer with protein S19. Forms two bridges to the 50S subunit in the 70S ribosome.

Located at the top of the head of the 30S subunit, it contacts several helices of the 16S rRNA. In the 70S ribosome it contacts the 23S rRNA (bridge B1a) and protein L5 of the 50S subunit (bridge B1b), connecting the 2 subunits; these bridges are implicated in subunit movement. Contacts the tRNAs in the A and P-sites. This Sinorhizobium fredii (strain NBRC 101917 / NGR234) protein is Small ribosomal subunit protein uS13.